Here is a 412-residue protein sequence, read N- to C-terminus: Adenosine receptor A2a (412 aa).

Topologically, residues 1 to 7 (MPIMGSS) are extracellular. The helical transmembrane segment at 8–32 (VYITVELAIAVLAILGNVLVCWAVW) threads the bilayer. The Cytoplasmic portion of the chain corresponds to 33–42 (LNSNLQNVTN). The helical transmembrane segment at 43–66 (YFVVSLAAADIAVGVLAIPFAITI) threads the bilayer. The Extracellular segment spans residues 67 to 77 (STGFCAACHGC). Disulfide bonds link Cys-71–Cys-159, Cys-74–Cys-146, and Cys-77–Cys-166. A helical transmembrane segment spans residues 78–100 (LFIACFVLVLTQSSIFSLLAIAI). Residues 101-120 (DRYIAIRIPLRYNGLVTGTR) are Cytoplasmic-facing. The chain crosses the membrane as a helical span at residues 121–143 (AKGIIAICWVLSFAIGLTPMLGW). The Extracellular segment spans residues 144-173 (NNCGQPKEGKNHSQGCGEGQVACLFEDVVP). Asn-154 carries N-linked (GlcNAc...) asparagine glycosylation. Glu-169 contributes to the adenosine binding site. The helical transmembrane segment at 174 to 198 (MNYMVYFNFFACVLVPLLLMLGVYL) threads the bilayer. Residues 199–234 (RIFLAARRQLKQMESQPLPGERARSTLQKEVHAAKS) are Cytoplasmic-facing. The helical transmembrane segment at 235 to 258 (LAIIVGLFALCWLPLHIINCFTFF) threads the bilayer. Asn-253 is an adenosine binding site. Cys-259 and Cys-262 are disulfide-bonded. At 259–266 (CPDCSHAP) the chain is on the extracellular side. Residues 267 to 290 (LWLMYLAIVLSHTNSVVNPFIYAY) traverse the membrane as a helical segment. Residues Ser-277 and His-278 each contribute to the adenosine site. At 291–412 (RIREFRQTFR…PLAQDGAGVS (122 aa)) the chain is on the cytoplasmic side. Residues 391 to 412 (KGVCPEPPGLDDPLAQDGAGVS) are disordered.

Belongs to the G-protein coupled receptor 1 family. Interacts (via cytoplasmic C-terminal domain) with USP4; the interaction is direct. May interact with DRD4. Interacts with NECAB2. Interacts (via cytoplasmic C-terminal domain) with GAS2L2; interaction enhances receptor-mediated adenylyl cyclase activity. Ubiquitinated. Deubiquitinated by USP4; leading to stabilization and expression at the cell surface.

The protein resides in the cell membrane. Receptor for adenosine. The activity of this receptor is mediated by G proteins which activate adenylyl cyclase. The sequence is that of Adenosine receptor A2a (ADORA2A) from Homo sapiens (Human).